We begin with the raw amino-acid sequence, 193 residues long: Peptidyl-tRNA hydrolase (193 aa).

A tRNA-binding site is contributed by Tyr15. Residue His20 is the Proton acceptor of the active site. The tRNA site is built by Phe65, Asn67, and Asn113.

This sequence belongs to the PTH family. As to quaternary structure, monomer.

Its subcellular location is the cytoplasm. The enzyme catalyses an N-acyl-L-alpha-aminoacyl-tRNA + H2O = an N-acyl-L-amino acid + a tRNA + H(+). Hydrolyzes ribosome-free peptidyl-tRNAs (with 1 or more amino acids incorporated), which drop off the ribosome during protein synthesis, or as a result of ribosome stalling. In terms of biological role, catalyzes the release of premature peptidyl moieties from peptidyl-tRNA molecules trapped in stalled 50S ribosomal subunits, and thus maintains levels of free tRNAs and 50S ribosomes. This is Peptidyl-tRNA hydrolase from Ehrlichia ruminantium (strain Welgevonden).